Consider the following 193-residue polypeptide: Dual-action ribosomal maturation protein DarP (193 aa).

Positions 1 to 10 (MRGRDEDTGE) are enriched in basic and acidic residues. Disordered stretches follow at residues 1 to 20 (MRGR…SQQR) and 170 to 193 (SQKP…ENDE). Residues 181-193 (GLEDEESASENDE) are compositionally biased toward acidic residues.

The protein belongs to the DarP family.

It is found in the cytoplasm. Functionally, member of a network of 50S ribosomal subunit biogenesis factors which assembles along the 30S-50S interface, preventing incorrect 23S rRNA structures from forming. Promotes peptidyl transferase center (PTC) maturation. This is Dual-action ribosomal maturation protein DarP from Xanthomonas campestris pv. campestris (strain 8004).